A 364-amino-acid chain; its full sequence is Chorismate synthase (364 aa).

Residues Arg-48 and Arg-54 each contribute to the NADP(+) site. FMN-binding positions include 125–127 (RSS), 238–239 (NA), Gly-278, 293–297 (KPTSS), and Arg-319.

The protein belongs to the chorismate synthase family. As to quaternary structure, homotetramer. It depends on FMNH2 as a cofactor.

It catalyses the reaction 5-O-(1-carboxyvinyl)-3-phosphoshikimate = chorismate + phosphate. Its pathway is metabolic intermediate biosynthesis; chorismate biosynthesis; chorismate from D-erythrose 4-phosphate and phosphoenolpyruvate: step 7/7. Catalyzes the anti-1,4-elimination of the C-3 phosphate and the C-6 proR hydrogen from 5-enolpyruvylshikimate-3-phosphate (EPSP) to yield chorismate, which is the branch point compound that serves as the starting substrate for the three terminal pathways of aromatic amino acid biosynthesis. This reaction introduces a second double bond into the aromatic ring system. The chain is Chorismate synthase from Shewanella sediminis (strain HAW-EB3).